The following is a 204-amino-acid chain: uncharacterized protein (204 aa).

Functionally, possibly involved in pGI2 replication mechanism. This is an uncharacterized protein from Bacillus thuringiensis.